Consider the following 439-residue polypeptide: O-methyltransferase aurJ (439 aa).

D283 is an S-adenosyl-L-methionine binding site. Catalysis depends on H338, which acts as the Proton acceptor.

This sequence belongs to the class I-like SAM-binding methyltransferase superfamily. Cation-independent O-methyltransferase family. COMT subfamily.

It carries out the reaction norrubrofusarin + S-adenosyl-L-methionine = rubrofusarin + S-adenosyl-L-homocysteine + H(+). The protein operates within pigment biosynthesis. Functionally, O-methyltransferase; part of the gene cluster that mediates the biosynthesis of aurofusarin, a red mycelium pigment which is acting as a mycotoxin. The first step is performed by the polyketide synthase which condenses one acetyl-CoA and 6 malonyl-CoA units to form the first intermediate, the cyclic heptaketide and yellow pigment YWA1. The C2 hydroxyl group in the pyrone ring of YWA1 is probably formed during ring closure by an aldol-type cyclization reaction. The dehydratase aurZ then acts as the first tailoring enzyme in the aurofusarin biosynthetic pathway by converting YWA1 to nor-rubrofusarin. Nor-rubrofusarin is then methylated to rubrofusarin by the O-methyltransferase aurJ. Rubrofusarin is then transported across the plasma membrane by the rubrofusarin-specific pump aurT for further enzymatic processing by the extracellular complex composed of GIP1, aurF, aurO and aurS to yield aurofusarin. The chain is O-methyltransferase aurJ from Gibberella zeae (strain ATCC MYA-4620 / CBS 123657 / FGSC 9075 / NRRL 31084 / PH-1) (Wheat head blight fungus).